The chain runs to 162 residues: RNA pyrophosphohydrolase (162 aa).

One can recognise a Nudix hydrolase domain in the interval 11-155 (PYRPCVGIVL…KRAVYEEVVA (145 aa)). Positions 45–66 (GGIDEGEKPREAALRELWEETG) match the Nudix box motif.

It belongs to the Nudix hydrolase family. RppH subfamily. It depends on a divalent metal cation as a cofactor.

Functionally, accelerates the degradation of transcripts by removing pyrophosphate from the 5'-end of triphosphorylated RNA, leading to a more labile monophosphorylated state that can stimulate subsequent ribonuclease cleavage. The chain is RNA pyrophosphohydrolase from Cereibacter sphaeroides (strain ATCC 17029 / ATH 2.4.9) (Rhodobacter sphaeroides).